A 405-amino-acid polypeptide reads, in one-letter code: Putative arsenical pump-driving ATPase (405 aa).

8 to 15 (GKGGVGKT) lines the ATP pocket.

This sequence belongs to the arsA ATPase family.

It carries out the reaction arsenite(in) + ATP + H2O = arsenite(out) + ADP + phosphate + H(+). Its function is as follows. Anion-transporting ATPase. Catalyzes the extrusion of arsenite. The sequence is that of Putative arsenical pump-driving ATPase from Prosthecochloris vibrioformis (Chlorobium vibrioforme).